A 598-amino-acid polypeptide reads, in one-letter code: mRNA-capping enzyme (598 aa).

The tract at residues 1–215 (MSQTGAPPRW…GSASAPASEP (215 aa)) is TPase. The 159-residue stretch at 25–183 (LPMKTMLGPR…FRRYGDVEDA (159 aa)) folds into the Tyrosine-protein phosphatase domain. The Phosphocysteine intermediate role is filled by C126. Residues 186-227 (APPLPEWCFDEDEEEDGEEDGSASAPASEPSSSHTGQSKKKK) form a disordered region. The segment covering 193-206 (CFDEDEEEDGEEDG) has biased composition (acidic residues). The segment covering 207–218 (SASAPASEPSSS) has biased composition (low complexity). The interval 233–598 (GAVFLEGVSV…PKRSANSIPQ (366 aa)) is GTase. The active-site N6-GMP-lysine intermediate is the K298. GTP contacts are provided by residues R303, R319, 347 to 349 (DGE), 462 to 464 (KWK), and 532 to 537 (RQRVDK). The segment at 575–598 (RKNPADSDLMPPPPPKRSANSIPQ) is disordered.

In the N-terminal section; belongs to the non-receptor class of the protein-tyrosine phosphatase family. The protein in the C-terminal section; belongs to the eukaryotic GTase family.

Its subcellular location is the nucleus. It catalyses the reaction a 5'-end triphospho-ribonucleoside in mRNA + H2O = a 5'-end diphospho-ribonucleoside in mRNA + phosphate + H(+). The enzyme catalyses a 5'-end diphospho-ribonucleoside in mRNA + GTP + H(+) = a 5'-end (5'-triphosphoguanosine)-ribonucleoside in mRNA + diphosphate. In terms of biological role, bifunctional mRNA-capping enzyme exhibiting RNA 5'-triphosphate monophosphatase activity in the N-terminal part and mRNA guanylyltransferase activity in the C-terminal part. Catalyzes the first two steps of cap formation: by removing the gamma-phosphate from the 5'-triphosphate end of nascent mRNA to yield a diphosphate end, and by transferring the GMP moiety of GTP to the 5'-diphosphate terminus of RNA via a covalent enzyme-GMP reaction intermediate. The sequence is that of mRNA-capping enzyme (rngtt) from Danio rerio (Zebrafish).